Consider the following 318-residue polypeptide: Bis(5'-nucleosyl)-tetraphosphatase, symmetrical (318 aa).

A disordered region spans residues 269-318 (PGREVTGPAPVARAPRRPRERQGRQRSRGNRGNAGNAAAGPKPSVDTPQD). Positions 282–297 (APRRPRERQGRQRSRG) are enriched in basic residues. The segment covering 298-311 (NRGNAGNAAAGPKP) has biased composition (low complexity).

This sequence belongs to the Ap4A hydrolase family.

The catalysed reaction is P(1),P(4)-bis(5'-adenosyl) tetraphosphate + H2O = 2 ADP + 2 H(+). Hydrolyzes diadenosine 5',5'''-P1,P4-tetraphosphate to yield ADP. This Xanthomonas euvesicatoria pv. vesicatoria (strain 85-10) (Xanthomonas campestris pv. vesicatoria) protein is Bis(5'-nucleosyl)-tetraphosphatase, symmetrical.